Here is a 198-residue protein sequence, read N- to C-terminus: Twist-related protein 1 (198 aa).

The segment covering 1 to 18 (MMQDVSSSPVSPADDSLS) has biased composition (low complexity). The tract at residues 1 to 101 (MMQDVSSSPV…GGGSPQSYEE (101 aa)) is disordered. Positions 34-43 (RGGRKRRSSR) are enriched in basic residues. Composition is skewed to gly residues over residues 46-64 (AGGG…GGDE) and 79-95 (GCGG…GGGS). The bHLH domain maps to 104–155 (TQRVMANVRERQRTQSLNEAFAALRKIIPTLPSDKLSKIQTLKLAARYIDFL). The interval 157 to 187 (QVLQSDELDSKMASCSYVAHERLSYAFSVWR) is sufficient for transactivation activity.

As to quaternary structure, efficient DNA binding requires dimerization with another bHLH protein. Homodimer or heterodimer with E proteins such as TCF3. ID1 binds preferentially to TCF3 but does not interact efficiently with TWIST1 so ID1 levels control the amount of TCF3 available to dimerize with TWIST and thus determine the type of dimer formed.

It localises to the nucleus. Functionally, acts as a transcriptional regulator. Inhibits myogenesis by sequestrating E proteins, inhibiting trans-activation by MEF2, and inhibiting DNA-binding by MYOD1 through physical interaction. This interaction probably involves the basic domains of both proteins. Also represses expression of pro-inflammatory cytokines such as TNFA and IL1B. Regulates cranial suture patterning and fusion. Activates transcription as a heterodimer with E proteins. Regulates gene expression differentially, depending on dimer composition. Homodimers induce expression of FGFR2 and POSTN while heterodimers repress FGFR2 and POSTN expression and induce THBS1 expression. Heterodimerization is also required for osteoblast differentiation. Represses the activity of the circadian transcriptional activator: NPAS2-BMAL1 heterodimer. This Eulemur fulvus fulvus (Brown lemur) protein is Twist-related protein 1 (TWIST1).